Here is a 425-residue protein sequence, read N- to C-terminus: Serine--tRNA ligase (425 aa).

230–232 provides a ligand contact to L-serine; that stretch reads TAE. 261–263 provides a ligand contact to ATP; it reads RSE. Position 284 (Glu-284) interacts with L-serine. 348–351 contributes to the ATP binding site; it reads EISS. Ser-384 contributes to the L-serine binding site.

Belongs to the class-II aminoacyl-tRNA synthetase family. Type-1 seryl-tRNA synthetase subfamily. Homodimer. The tRNA molecule binds across the dimer.

It is found in the cytoplasm. The enzyme catalyses tRNA(Ser) + L-serine + ATP = L-seryl-tRNA(Ser) + AMP + diphosphate + H(+). It catalyses the reaction tRNA(Sec) + L-serine + ATP = L-seryl-tRNA(Sec) + AMP + diphosphate + H(+). Its pathway is aminoacyl-tRNA biosynthesis; selenocysteinyl-tRNA(Sec) biosynthesis; L-seryl-tRNA(Sec) from L-serine and tRNA(Sec): step 1/1. Its function is as follows. Catalyzes the attachment of serine to tRNA(Ser). Is also able to aminoacylate tRNA(Sec) with serine, to form the misacylated tRNA L-seryl-tRNA(Sec), which will be further converted into selenocysteinyl-tRNA(Sec). This is Serine--tRNA ligase from Maridesulfovibrio salexigens (strain ATCC 14822 / DSM 2638 / NCIMB 8403 / VKM B-1763) (Desulfovibrio salexigens).